We begin with the raw amino-acid sequence, 179 residues long: Large ribosomal subunit protein uL5 (179 aa).

Belongs to the universal ribosomal protein uL5 family. In terms of assembly, part of the 50S ribosomal subunit; part of the 5S rRNA/L5/L18/L25 subcomplex. Contacts the 5S rRNA and the P site tRNA. Forms a bridge to the 30S subunit in the 70S ribosome.

This is one of the proteins that bind and probably mediate the attachment of the 5S RNA into the large ribosomal subunit, where it forms part of the central protuberance. In the 70S ribosome it contacts protein S13 of the 30S subunit (bridge B1b), connecting the 2 subunits; this bridge is implicated in subunit movement. Contacts the P site tRNA; the 5S rRNA and some of its associated proteins might help stabilize positioning of ribosome-bound tRNAs. This is Large ribosomal subunit protein uL5 from Pseudomonas savastanoi pv. phaseolicola (strain 1448A / Race 6) (Pseudomonas syringae pv. phaseolicola (strain 1448A / Race 6)).